The sequence spans 504 residues: Ribose import ATP-binding protein RbsA 3 (504 aa).

ABC transporter domains are found at residues 6-238 and 251-494; these read ANLK…VGRP and IGAE…MMGG. 38–45 contacts ATP; sequence GENGAGKS.

Belongs to the ABC transporter superfamily. Ribose importer (TC 3.A.1.2.1) family. As to quaternary structure, the complex is composed of an ATP-binding protein (RbsA), two transmembrane proteins (RbsC) and a solute-binding protein (RbsB).

It is found in the cell inner membrane. It catalyses the reaction D-ribose(out) + ATP + H2O = D-ribose(in) + ADP + phosphate + H(+). Part of the ABC transporter complex RbsABC involved in ribose import. Responsible for energy coupling to the transport system. This Rhizobium meliloti (strain 1021) (Ensifer meliloti) protein is Ribose import ATP-binding protein RbsA 3.